The following is a 344-amino-acid chain: Follistatin (344 aa).

A signal peptide spans methionine 1–alanine 29. Residues glycine 30–glycine 103 enclose the TB domain. Cystine bridges form between cysteine 32–cysteine 55, cysteine 42–cysteine 88, cysteine 56–cysteine 91, cysteine 95–cysteine 106, cysteine 100–cysteine 116, cysteine 118–cysteine 150, cysteine 122–cysteine 143, cysteine 132–cysteine 164, cysteine 168–cysteine 179, cysteine 173–cysteine 189, cysteine 192–cysteine 225, cysteine 196–cysteine 218, cysteine 207–cysteine 239, cysteine 245–cysteine 256, cysteine 250–cysteine 267, cysteine 270–cysteine 302, cysteine 274–cysteine 295, and cysteine 284–cysteine 316. Positions threonine 94–valine 117 constitute a Follistatin-like 1 domain. The region spanning asparagine 112–lysine 166 is the Kazal-like 1 domain. N-linked (GlcNAc...) asparagine glycosylation is present at asparagine 124. The Follistatin-like 2 domain occupies threonine 167 to valine 190. In terms of domain architecture, Kazal-like 2 spans asparagine 186 to lysine 241. Positions serine 244–serine 268 constitute a Follistatin-like 3 domain. The 55-residue stretch at arginine 264–serine 318 folds into the Kazal-like 3 domain. Asparagine 288 carries N-linked (GlcNAc...) asparagine glycosylation. The tract at residues glycine 314–tryptophan 344 is disordered. Over residues glutamate 321 to aspartate 333 the composition is skewed to acidic residues.

In terms of assembly, interacts with GDF11. Interacts with activin A/INHBA. Interacts with MYOSTATIN/MSTN. Isoform 1 is the predominant isoform in serum but is undetectable in follicular fluid. In the embryo, strong expression is seen in the palatal epithelia, including the medial edge epithelial and midline epithelial seam of the palatal shelves. Less pronounced expression is also seen throughout the palatal shelf and tongue mesenchyme.

It is found in the secreted. The protein resides in the nucleus. Its subcellular location is the nucleolus. In terms of biological role, multifunctional regulatory protein whose primary function is to antagonize members of the transforming growth factor beta (TGF-beta) superfamily including activin, myostatin, GDF11 or bone morphogenetic proteins (BMPs). Mechanistically, binds to these ligands in the extracellular space, blocking their type II receptor-binding site to inhibit downstream signaling. Plays an essential role in muscle fiber formation and growth both by preventing the repressive effects of myostatin and through SMAD3/AKT/mTOR signaling independently of myostatin. Also promotes neural differentiation by antagonizing the action BMP4. Acts as a specific inhibitor of the biosynthesis and secretion of pituitary follicle stimulating hormone (FSH) by sequestering activin A/INHBA. On the other hand, translocates into the nucleus where it down-regulates rRNA synthesis and ribosome biogenesis to maintain cellular energy homeostasis by binding to rDNA. This chain is Follistatin, found in Homo sapiens (Human).